The chain runs to 946 residues: Leucine--tRNA ligase (946 aa).

The 'HIGH' region motif lies at 40-51 (PYPSGAGLHVGH). The short motif at 719 to 723 (KMSKS) is the 'KMSKS' region element. Residue K722 participates in ATP binding.

It belongs to the class-I aminoacyl-tRNA synthetase family.

It localises to the cytoplasm. It carries out the reaction tRNA(Leu) + L-leucine + ATP = L-leucyl-tRNA(Leu) + AMP + diphosphate. The sequence is that of Leucine--tRNA ligase from Parabacteroides distasonis (strain ATCC 8503 / DSM 20701 / CIP 104284 / JCM 5825 / NCTC 11152).